The primary structure comprises 113 residues: Integration host factor subunit alpha (113 aa).

Residues 59 to 80 (GNFQVRDKPPRPGRNPKTGETI) form a disordered region.

It belongs to the bacterial histone-like protein family. As to quaternary structure, heterodimer of an alpha and a beta chain.

In terms of biological role, this protein is one of the two subunits of integration host factor, a specific DNA-binding protein that functions in genetic recombination as well as in transcriptional and translational control. The polypeptide is Integration host factor subunit alpha (Bordetella bronchiseptica (strain ATCC BAA-588 / NCTC 13252 / RB50) (Alcaligenes bronchisepticus)).